Consider the following 430-residue polypeptide: Tol-Pal system protein TolB (430 aa).

Residues 1 to 21 (MKQALRVAFGFLILWASVLHA) form the signal peptide.

The protein belongs to the TolB family. As to quaternary structure, the Tol-Pal system is composed of five core proteins: the inner membrane proteins TolA, TolQ and TolR, the periplasmic protein TolB and the outer membrane protein Pal. They form a network linking the inner and outer membranes and the peptidoglycan layer.

The protein resides in the periplasm. Its function is as follows. Part of the Tol-Pal system, which plays a role in outer membrane invagination during cell division and is important for maintaining outer membrane integrity. TolB occupies a key intermediary position in the Tol-Pal system because it communicates directly with both membrane-embedded components, Pal in the outer membrane and TolA in the inner membrane. This chain is Tol-Pal system protein TolB, found in Escherichia coli O8 (strain IAI1).